The primary structure comprises 295 residues: Aquaporin-9 (295 aa).

The Cytoplasmic segment spans residues 1-24; sequence MQPEGAEKGKSFKQRLVLKSSLAK. A helical membrane pass occupies residues 25–43; sequence ETLSEFLGTFILIVLGCGC. At 44 to 57 the chain is on the extracellular side; the sequence is VAQAILSRGRFGGV. The chain crosses the membrane as a helical span at residues 58–77; the sequence is ITINVGFSMAVAMAIYVAGG. The Cytoplasmic segment spans residues 78-79; that stretch reads VS. Positions 80 to 92 form an intramembrane region, discontinuously helical; that stretch reads GGHINPAVSLAMC. The short motif at 84–86 is the NPA 1 element; sequence NPA. Topologically, residues 93-98 are cytoplasmic; that stretch reads LFGRMK. A helical membrane pass occupies residues 99–123; it reads WFKLPFYVGAQFLGAFVGAATVFGI. Over 124–160 the chain is Extracellular; it reads YYDGLMSFAGGKLLIVGENATAHIFATYPAPYLSLAN. The helical transmembrane segment at 161 to 178 threads the bilayer; the sequence is AFADQVVATMILLIIVFA. Topologically, residues 179–190 are cytoplasmic; the sequence is IFDSRNLGAPRG. Residues 191-207 form a helical membrane-spanning segment; it reads LEPIAIGLLIIVIASSL. The Extracellular portion of the chain corresponds to 208 to 210; that stretch reads GLN. Positions 211–225 form an intramembrane region, discontinuously helical; sequence SGCAMNPARDLSPRL. The short motif at 216-218 is the NPA 2 element; that stretch reads NPA. Residues 226 to 243 are Extracellular-facing; the sequence is FTALAGWGFEVFRAGNNF. Residues 244-264 form a helical membrane-spanning segment; that stretch reads WWIPVVGPLVGAVIGGLIYVL. Topologically, residues 265 to 295 are cytoplasmic; sequence VIEIHHPEPDSVFKTEQSEDKPEKYELSVIM.

Belongs to the MIP/aquaporin (TC 1.A.8) family. In terms of assembly, homotetramer; each monomer provides an independent glycerol/water pore. In terms of tissue distribution, highly expressed in peripheral leukocytes. Also expressed in liver, lung, and spleen.

The protein localises to the cell membrane. It localises to the basolateral cell membrane. The catalysed reaction is glycerol(in) = glycerol(out). It catalyses the reaction H2O(in) = H2O(out). The enzyme catalyses urea(in) = urea(out). It carries out the reaction (S)-lactate(in) = (S)-lactate(out). The catalysed reaction is NH4(+)(in) = NH4(+)(out). It catalyses the reaction uracil(in) = uracil(out). The enzyme catalyses adenine(out) = adenine(in). It carries out the reaction 3-hydroxybutanoate(in) = 3-hydroxybutanoate(out). The catalysed reaction is D-sorbitol(in) = D-sorbitol(out). It catalyses the reaction D-mannitol(in) = D-mannitol(out). The enzyme catalyses H2O2(out) = H2O2(in). It carries out the reaction arsenite(in) = arsenite(out). The catalysed reaction is selenite(in) = selenite(out). Its function is as follows. Aquaglyceroporins form homotetrameric transmembrane channels, with each monomer independently mediating glycerol and water transport across the plasma membrane along their osmotic gradient. AQP9 is the primary route for glycerol uptake in hepatocytes, supporting hepatic gluconeogenesis. It exhibits broad specificity and may transport various small, non-charged solutes, including carbamides, polyols, purines, and pyrimidines. AQP9 may also facilitate hepatic urea extrusion. Due to its permeability to lactate, AQP9 might participate in the astrocyte-to-neuron lactate shuttle, supplying neurons with energy. Additionally, AQP9 is permeable to arsenite, contributing to arsenic excretion by the liver and providing partial protection against arsenic toxicity. It is also permeable to H2O2 in vivo. Could also be permeable to ammonium. The protein is Aquaporin-9 of Homo sapiens (Human).